Here is a 297-residue protein sequence, read N- to C-terminus: Small ribosomal subunit protein uS2 (297 aa).

A disordered region spans residues 252–297; that stretch reads GVPGTAFSAATAAPTSWEADGGDWAASSAAPAGESWAETQPAEAKW. The span at 256–289 shows a compositional bias: low complexity; sequence TAFSAATAAPTSWEADGGDWAASSAAPAGESWAE.

This sequence belongs to the universal ribosomal protein uS2 family. In terms of assembly, component of the small ribosomal subunit. Mature ribosomes consist of a small (40S) and a large (60S) subunit. The 40S subunit contains about 33 different proteins and 1 molecule of RNA (18S). The 60S subunit contains about 49 different proteins and 3 molecules of RNA (25S, 5.8S and 5S). Interacts with rps21.

It localises to the cytoplasm. In terms of biological role, required for the assembly and/or stability of the 40S ribosomal subunit. Required for the processing of the 20S rRNA-precursor to mature 18S rRNA in a late step of the maturation of 40S ribosomal subunits. The protein is Small ribosomal subunit protein uS2 (rps0) of Aspergillus fumigatus (strain CBS 144.89 / FGSC A1163 / CEA10) (Neosartorya fumigata).